We begin with the raw amino-acid sequence, 785 residues long: Endonuclease MutS2 (785 aa).

Residue 334–341 (GPNTGGKT) participates in ATP binding. The Smr domain occupies 710–785 (LDLRGKRYEE…GNGATIVHFK (76 aa)).

The protein belongs to the DNA mismatch repair MutS family. MutS2 subfamily. Homodimer. Binds to stalled ribosomes, contacting rRNA.

Functionally, endonuclease that is involved in the suppression of homologous recombination and thus may have a key role in the control of bacterial genetic diversity. Its function is as follows. Acts as a ribosome collision sensor, splitting the ribosome into its 2 subunits. Detects stalled/collided 70S ribosomes which it binds and splits by an ATP-hydrolysis driven conformational change. Acts upstream of the ribosome quality control system (RQC), a ribosome-associated complex that mediates the extraction of incompletely synthesized nascent chains from stalled ribosomes and their subsequent degradation. Probably generates substrates for RQC. The protein is Endonuclease MutS2 of Pediococcus pentosaceus (strain ATCC 25745 / CCUG 21536 / LMG 10740 / 183-1w).